The following is a 321-amino-acid chain: MGDLPLNINIQEPRWDQSTFLGRARHFFTVTDPRNLLLSGKQLEASRNIVQNYRAGVVTPGLTEDQLWRAKYVYDSAFHPDTGEKVVLIGRMSAQVPMNMTITGCMLTFYRKTPTMVFWQWVNQSFNAIVNYSNRSGDAPITVQQLGTAYVSATTGAVATALGLKSLTKHLPPLVGRFVPFAAVAAANCINIPLMRQRELQVGIPVTDEAGQRLGHSVTAAKQGIFQVVVSRIGMAIPAMAIPPVIMNTLEKKDFLKRRPWLGAPLQVGLVGFCLVFATPLCCALFPQRSSIHVTRLEPELRAQIQAQKPSIDVVYYNKGL.

The residue at position 1 (Met1) is an N-acetylmethionine. The next 4 membrane-spanning stretches (helical) occupy residues 146 to 164, 174 to 194, 225 to 245, and 266 to 286; these read LGTA…ALGL, LVGR…NIPL, IFQV…IPPV, and LQVG…CALF.

The protein belongs to the sideroflexin family.

It localises to the mitochondrion membrane. The enzyme catalyses L-serine(in) = L-serine(out). Its function is as follows. Mitochondrial serine transporter that mediates transport of serine into mitochondria, an important step of the one-carbon metabolism pathway. Mitochondrial serine is converted to glycine and formate, which then exits to the cytosol where it is used to generate the charged folates that serve as one-carbon donors. The sequence is that of Sideroflexin-3 (Sfxn3) from Rattus norvegicus (Rat).